The chain runs to 1006 residues: SAC3 family protein A (1006 aa).

Disordered regions lie at residues M1–T75, T106–Y162, G183–T239, G266–T326, T516–P550, G595–D638, and A650–H690. 2 stretches are compositionally biased toward polar residues: residues G26–T75 and T106–H115. Residues N116–P140 are compositionally biased toward low complexity. Positions Y144–Y162 are enriched in polar residues. 2 stretches are compositionally biased toward polar residues: residues K269 to F282 and S313 to T326. The span at T516–S539 shows a compositional bias: low complexity. Basic residues predominate over residues S609–R618. Positions A653–K680 are enriched in basic and acidic residues. In terms of domain architecture, PCI spans D804–S978.

Belongs to the SAC3 family. In terms of assembly, interacts with EER5, SAC3B and CML20.

The protein localises to the nucleus. In terms of biological role, component of the TREX-2 complex (transcription and export complex 2), a muliprotein complex that functions in docking export-competent ribonucleoprotein particles (mRNPs) to the nuclear entrance of the nuclear pore complex (nuclear basket). TREX-2 participates in mRNA export and accurate chromatin positioning in the nucleus by tethering genes to the nuclear periphery. In Arabidopsis thaliana (Mouse-ear cress), this protein is SAC3 family protein A.